A 240-amino-acid polypeptide reads, in one-letter code: Adapter protein MecA (240 aa).

Residues 118-138 (EQRAQQQKHSHKSEQKQTKQR) form a disordered region.

Belongs to the MecA family. In terms of assembly, homodimer.

Functionally, enables the recognition and targeting of unfolded and aggregated proteins to the ClpC protease or to other proteins involved in proteolysis. The protein is Adapter protein MecA of Staphylococcus haemolyticus (strain JCSC1435).